The chain runs to 166 residues: NAD(P)H-quinone oxidoreductase subunit I, chloroplastic (166 aa).

4Fe-4S ferredoxin-type domains are found at residues glycine 55 to lysine 84 and leucine 95 to glutamate 124. [4Fe-4S] cluster contacts are provided by cysteine 64, cysteine 67, cysteine 70, cysteine 74, cysteine 104, cysteine 107, cysteine 110, and cysteine 114.

It belongs to the complex I 23 kDa subunit family. In terms of assembly, NDH is composed of at least 16 different subunits, 5 of which are encoded in the nucleus. Requires [4Fe-4S] cluster as cofactor.

It is found in the plastid. It localises to the chloroplast thylakoid membrane. The enzyme catalyses a plastoquinone + NADH + (n+1) H(+)(in) = a plastoquinol + NAD(+) + n H(+)(out). The catalysed reaction is a plastoquinone + NADPH + (n+1) H(+)(in) = a plastoquinol + NADP(+) + n H(+)(out). In terms of biological role, NDH shuttles electrons from NAD(P)H:plastoquinone, via FMN and iron-sulfur (Fe-S) centers, to quinones in the photosynthetic chain and possibly in a chloroplast respiratory chain. The immediate electron acceptor for the enzyme in this species is believed to be plastoquinone. Couples the redox reaction to proton translocation, and thus conserves the redox energy in a proton gradient. The polypeptide is NAD(P)H-quinone oxidoreductase subunit I, chloroplastic (Sigesbeckia blakei).